A 351-amino-acid chain; its full sequence is Ceramide hydroxylase (351 aa).

The next 4 membrane-spanning stretches (helical) occupy residues 26–46 (AAIY…GFLI), 47–67 (AATT…MLAL), 141–161 (GFLF…AILI), and 204–224 (VACW…VVPV).

This sequence belongs to the fatty acid desaturase type 1 family.

The protein resides in the cell inner membrane. Its pathway is lipid metabolism; sphingolipid metabolism. Involved in de novo bacterial ceramide synthesis. The polypeptide is Ceramide hydroxylase (Caulobacter vibrioides (strain NA1000 / CB15N) (Caulobacter crescentus)).